The chain runs to 240 residues: MDHENPIVHDIFGIPGANLNLSNLMMTFIVCLIVFVFCVWGSRKLQMKPKGIQNFMEWAVEFVRGIIQDNMDWKTGRIFLPLGLTLIFYILVSNLIGVATVGVVEHDLWWKSPTADAVMTLTLSTMIIALTHYYGIKLRGTKAYLKTYVSPVPLMLPFKIVEEFTNTLTLGLRLFGNIYAGEILLSLLVGLATTSIFGFFGAALPMLAWQTFSVFIGAIQSYVFVMLTMVYMSHKVSSDH.

A run of 5 helical transmembrane segments spans residues 21 to 41, 78 to 98, 116 to 136, 183 to 203, and 212 to 232; these read LSNL…CVWG, IFLP…LIGV, DAVM…YYGI, ILLS…FGAA, and FSVF…MVYM.

It belongs to the ATPase A chain family. As to quaternary structure, F-type ATPases have 2 components, CF(1) - the catalytic core - and CF(0) - the membrane proton channel. CF(1) has five subunits: alpha(3), beta(3), gamma(1), delta(1), epsilon(1). CF(0) has three main subunits: a(1), b(2) and c(9-12). The alpha and beta chains form an alternating ring which encloses part of the gamma chain. CF(1) is attached to CF(0) by a central stalk formed by the gamma and epsilon chains, while a peripheral stalk is formed by the delta and b chains.

Its subcellular location is the cell membrane. Key component of the proton channel; it plays a direct role in the translocation of protons across the membrane. This chain is ATP synthase subunit a, found in Oceanobacillus iheyensis (strain DSM 14371 / CIP 107618 / JCM 11309 / KCTC 3954 / HTE831).